Here is a 67-residue protein sequence, read N- to C-terminus: DNA-directed RNA polymerase subunit omega (67 aa).

This sequence belongs to the RNA polymerase subunit omega family. As to quaternary structure, the RNAP catalytic core consists of 2 alpha, 1 beta, 1 beta' and 1 omega subunit. When a sigma factor is associated with the core the holoenzyme is formed, which can initiate transcription.

It catalyses the reaction RNA(n) + a ribonucleoside 5'-triphosphate = RNA(n+1) + diphosphate. In terms of biological role, promotes RNA polymerase assembly. Latches the N- and C-terminal regions of the beta' subunit thereby facilitating its interaction with the beta and alpha subunits. In Ralstonia nicotianae (strain ATCC BAA-1114 / GMI1000) (Ralstonia solanacearum), this protein is DNA-directed RNA polymerase subunit omega.